The primary structure comprises 270 residues: Putative [LysW]-aminoadipate/[LysW]-glutamate kinase (270 aa).

Substrate contacts are provided by residues 42–43 (GG), Arg-69, and Asn-177.

It belongs to the acetylglutamate kinase family. LysZ subfamily.

Its subcellular location is the cytoplasm. It carries out the reaction [amino-group carrier protein]-C-terminal-N-(1,4-dicarboxybutan-1-yl)-L-glutamine + ATP = [amino-group carrier protein]-C-terminal-N-(1-carboxy-5-phosphooxy-5-oxopentan-1-yl)-L-glutamine + ADP. It catalyses the reaction [amino-group carrier protein]-C-terminal-gamma-(L-glutamyl)-L-glutamate + ATP = [amino-group carrier protein]-C-terminal-gamma-(5-phospho-L-glutamyl)-L-glutamate + ADP. Its pathway is amino-acid biosynthesis; L-lysine biosynthesis via AAA pathway; L-lysine from L-alpha-aminoadipate (Thermus route): step 2/5. The protein operates within amino-acid biosynthesis; L-arginine biosynthesis. Involved in both the arginine and lysine biosynthetic pathways. Phosphorylates the LysW-bound precursors glutamate (for arginine biosynthesis), respectively alpha-aminoadipate (for lysine biosynthesis). The protein is Putative [LysW]-aminoadipate/[LysW]-glutamate kinase of Aeropyrum pernix (strain ATCC 700893 / DSM 11879 / JCM 9820 / NBRC 100138 / K1).